The primary structure comprises 371 residues: F-box protein At2g26850 (371 aa).

An F-box domain is found at Lys-59–His-105.

This chain is F-box protein At2g26850, found in Arabidopsis thaliana (Mouse-ear cress).